The chain runs to 395 residues: Glyceraldehyde-3-phosphate dehydrogenase, testis-specific (395 aa).

The segment at 1–60 is testis-specific N-terminal extension; it reads MSKRDIVLTNVTVVQLLRQPCPEPRVEAEPEPPAQPQPQPEPIKEEVPPPPPPPPAPKKV. The interval 19 to 59 is disordered; that stretch reads QPCPEPRVEAEPEPPAQPQPQPEPIKEEVPPPPPPPPAPKK. Pro residues-rich tracts occupy residues 31-41 and 48-57; these read EPPAQPQPQPE and PPPPPPPPAP. Residues 72–73, Asp93, and Lys138 each bind NAD(+); that span reads RI. D-glyceraldehyde 3-phosphate-binding positions include 210–212, Thr241, 270–271, and Arg293; these read SCT and TG. The active-site Nucleophile is the Cys211. Asn375 lines the NAD(+) pocket.

This sequence belongs to the glyceraldehyde-3-phosphate dehydrogenase family. In terms of assembly, homotetramer.

The protein localises to the cytoplasm. It catalyses the reaction D-glyceraldehyde 3-phosphate + phosphate + NAD(+) = (2R)-3-phospho-glyceroyl phosphate + NADH + H(+). It functions in the pathway carbohydrate degradation; glycolysis; pyruvate from D-glyceraldehyde 3-phosphate: step 1/5. Functionally, may play an important role in regulating the switch between different pathways for energy production during spermiogenesis and in the spermatozoon. Required for sperm motility and male fertility. The sequence is that of Glyceraldehyde-3-phosphate dehydrogenase, testis-specific (GAPDHS) from Bos taurus (Bovine).